A 457-amino-acid chain; its full sequence is Acetylcholine receptor subunit alpha (457 aa).

Positions 1–20 (MELTAVLLLLGLCSAGTVLG) are cleaved as a signal peptide. The Extracellular portion of the chain corresponds to 21–230 (SEHETRLVAK…ITYHFVMQRL (210 aa)). Cystine bridges form between Cys148/Cys162 and Cys212/Cys213. A glycan (N-linked (GlcNAc...) asparagine) is linked at Asn161. 3 helical membrane passes run 231–255 (PLYFIVNVIIPCLLFSFLTSLVFYL), 263–281 (MTLSISVLLSLTVFLLVIV), and 297–316 (YMLFTMVFVIASIIITVIVI). The Cytoplasmic segment spans residues 317 to 428 (NTHHRSPSTH…WKYVAMVMDH (112 aa)). The helical transmembrane segment at 429–447 (ILLGVFMLVCLIGTLAVFA) threads the bilayer.

This sequence belongs to the ligand-gated ion channel (TC 1.A.9) family. Acetylcholine receptor (TC 1.A.9.1) subfamily. Alpha-1/CHRNA1 sub-subfamily. In terms of assembly, one of the alpha chains that assemble within the acetylcholine receptor, a pentamer of two alpha chains, a beta, a delta, and a gamma (in immature muscle) or epsilon (in mature muscle) chains. The muscle heteropentamer composed of alpha-1, beta-1, delta, epsilon subunits interacts with the alpha-conotoxin ImII.

It is found in the postsynaptic cell membrane. It localises to the cell membrane. The enzyme catalyses K(+)(in) = K(+)(out). It catalyses the reaction Na(+)(in) = Na(+)(out). Upon acetylcholine binding, the AChR responds by an extensive change in conformation that affects all subunits and leads to opening of an ion-conducting channel across the plasma membrane. The sequence is that of Acetylcholine receptor subunit alpha (Chrna1) from Rattus norvegicus (Rat).